The following is a 283-amino-acid chain: Glutamate racemase (283 aa).

Substrate contacts are provided by residues 7-8 and 39-40; these read DS and YG. Residue Cys70 is the Proton donor/acceptor of the active site. 71–72 contributes to the substrate binding site; it reads NT. Residue Cys206 is the Proton donor/acceptor of the active site. 207-208 lines the substrate pocket; that stretch reads TH.

This sequence belongs to the aspartate/glutamate racemases family.

The enzyme catalyses L-glutamate = D-glutamate. It functions in the pathway cell wall biogenesis; peptidoglycan biosynthesis. In terms of biological role, provides the (R)-glutamate required for cell wall biosynthesis. The sequence is that of Glutamate racemase from Caulobacter sp. (strain K31).